Consider the following 594-residue polypeptide: UvrABC system protein C (594 aa).

A GIY-YIG domain is found at 13-99 (NSSGVYQYFD…IKQLKPKYNI (87 aa)). The UVR domain maps to 205-240 (DRLIKELELKMERLSSNLRFEEALIYRDRIAKIQKI).

This sequence belongs to the UvrC family. Interacts with UvrB in an incision complex.

The protein resides in the cytoplasm. The UvrABC repair system catalyzes the recognition and processing of DNA lesions. UvrC both incises the 5' and 3' sides of the lesion. The N-terminal half is responsible for the 3' incision and the C-terminal half is responsible for the 5' incision. The chain is UvrABC system protein C from Helicobacter pylori (strain G27).